A 219-amino-acid polypeptide reads, in one-letter code: Ribose-5-phosphate isomerase A (219 aa).

Substrate is bound by residues 28–31 (SGST), 81–84 (DGAD), and 94–97 (KGGG). Glutamate 103 acts as the Proton acceptor in catalysis. Lysine 121 provides a ligand contact to substrate.

This sequence belongs to the ribose 5-phosphate isomerase family. Homodimer.

The enzyme catalyses aldehydo-D-ribose 5-phosphate = D-ribulose 5-phosphate. It functions in the pathway carbohydrate degradation; pentose phosphate pathway; D-ribose 5-phosphate from D-ribulose 5-phosphate (non-oxidative stage): step 1/1. Functionally, catalyzes the reversible conversion of ribose-5-phosphate to ribulose 5-phosphate. This chain is Ribose-5-phosphate isomerase A, found in Haemophilus influenzae (strain 86-028NP).